The following is a 130-amino-acid chain: Small ribosomal subunit protein uS8 (130 aa).

Belongs to the universal ribosomal protein uS8 family. As to quaternary structure, part of the 30S ribosomal subunit. Contacts proteins S5 and S12.

In terms of biological role, one of the primary rRNA binding proteins, it binds directly to 16S rRNA central domain where it helps coordinate assembly of the platform of the 30S subunit. The chain is Small ribosomal subunit protein uS8 from Acidiphilium cryptum (strain JF-5).